Reading from the N-terminus, the 295-residue chain is Fatty acyl-CoA reductase (295 aa).

An NADP(+)-binding site is contributed by 21–28 (TGASSGIG). Serine 153 lines the substrate pocket. The Proton acceptor role is filled by tyrosine 166.

This sequence belongs to the short-chain dehydrogenases/reductases (SDR) family.

The catalysed reaction is hexadecanal + NADP(+) + CoA = hexadecanoyl-CoA + NADPH + H(+). In terms of biological role, catalyzes the NADPH-dependent reduction of long chain acyl-CoA (with chain lengths of 14 to 22 carbons) to the corresponding aldehyde. This is Fatty acyl-CoA reductase (acr1) from Acinetobacter baylyi (strain ATCC 33305 / BD413 / ADP1).